A 454-amino-acid polypeptide reads, in one-letter code: Phosphoglucosamine mutase (454 aa).

Serine 101 serves as the catalytic Phosphoserine intermediate. Serine 101, aspartate 243, aspartate 245, and aspartate 247 together coordinate Mg(2+). Serine 101 is modified (phosphoserine).

The protein belongs to the phosphohexose mutase family. Mg(2+) is required as a cofactor. Activated by phosphorylation.

The enzyme catalyses alpha-D-glucosamine 1-phosphate = D-glucosamine 6-phosphate. In terms of biological role, catalyzes the conversion of glucosamine-6-phosphate to glucosamine-1-phosphate. In Geotalea uraniireducens (strain Rf4) (Geobacter uraniireducens), this protein is Phosphoglucosamine mutase.